The primary structure comprises 122 residues: Large ribosomal subunit protein uL14c (122 aa).

This sequence belongs to the universal ribosomal protein uL14 family. Part of the 50S ribosomal subunit.

Its subcellular location is the plastid. It localises to the chloroplast. In terms of biological role, binds to 23S rRNA. The sequence is that of Large ribosomal subunit protein uL14c from Huperzia lucidula (Shining clubmoss).